Here is a 141-residue protein sequence, read N- to C-terminus: Hemoglobin subunit alpha (141 aa).

Positions 1 to 141 (VLSPADKTNI…VSTVLTSKYR (141 aa)) constitute a Globin domain. At S3 the chain carries Phosphoserine. An N6-succinyllysine modification is found at K7. Phosphothreonine is present on T8. Residue K11 is modified to N6-succinyllysine. K16 is subject to N6-acetyllysine; alternate. Position 16 is an N6-succinyllysine; alternate (K16). Position 24 is a phosphotyrosine (Y24). Phosphoserine is present on S35. At K40 the chain carries N6-succinyllysine. S49 bears the Phosphoserine mark. O2 is bound at residue H58. H87 contacts heme b. Phosphoserine is present on S102. Position 108 is a phosphothreonine (T108). S124 is subject to Phosphoserine. Phosphothreonine is present on residues T134 and T137. S138 is subject to Phosphoserine.

It belongs to the globin family. As to quaternary structure, heterotetramer of two alpha chains and two beta chains. As to expression, red blood cells.

Involved in oxygen transport from the lung to the various peripheral tissues. Functionally, hemopressin acts as an antagonist peptide of the cannabinoid receptor CNR1. Hemopressin-binding efficiently blocks cannabinoid receptor CNR1 and subsequent signaling. In Vulpes vulpes (Red fox), this protein is Hemoglobin subunit alpha (HBA).